The following is a 120-amino-acid chain: Probable non-functional immunoglobulin kappa variable 2D-24 (120 aa).

Positions 1 to 19 (MRLLAQLLGLLMLWVPGSS) are cleaved as a signal peptide. In terms of domain architecture, Ig-like spans 20–120 (GDIVMTQTPL…YYCTQATQFP (101 aa)). The segment at 21-43 (DIVMTQTPLSSPVTLGQPASISF) is framework-1. The tract at residues 44 to 59 (RSSQSLVHSDGNTYLS) is complementarity-determining-1. The segment at 60-74 (WLQQRPGQPPRLLIY) is framework-2. Residues 75–81 (KVSNRFS) form a complementarity-determining-2 region. Residues 82-113 (GVPDRFSGSGAGTDFTLKISRVEAEDVGVYYC) form a framework-3 region. The interval 114–120 (TQATQFP) is complementarity-determining-3.

In terms of assembly, most probably, the immunoglobulin is not assembled due to incorrect folding of light chain. Immunoglobulins are composed of two identical heavy chains and two identical light chains; disulfide-linked.

Its subcellular location is the secreted. The protein resides in the cell membrane. Probable non-functional open reading frame (ORF) of V region of the variable domain of immunoglobulin light chains. Non-functional ORF generally cannot participate in the synthesis of a productive immunoglobulin chain due to altered V-(D)-J or switch recombination and/or splicing site (at mRNA level) and/or conserved amino acid change (protein level). Immunoglobulins, also known as antibodies, are membrane-bound or secreted glycoproteins produced by B lymphocytes. In the recognition phase of humoral immunity, the membrane-bound immunoglobulins serve as receptors which, upon binding of a specific antigen, trigger the clonal expansion and differentiation of B lymphocytes into immunoglobulins-secreting plasma cells. Secreted immunoglobulins mediate the effector phase of humoral immunity, which results in the elimination of bound antigens. The antigen binding site is formed by the variable domain of one heavy chain, together with that of its associated light chain. Thus, each immunoglobulin has two antigen binding sites with remarkable affinity for a particular antigen. The variable domains are assembled by a process called V-(D)-J rearrangement and can then be subjected to somatic hypermutations which, after exposure to antigen and selection, allow affinity maturation for a particular antigen. The polypeptide is Probable non-functional immunoglobulin kappa variable 2D-24 (Homo sapiens (Human)).